A 90-amino-acid polypeptide reads, in one-letter code: DNA-directed RNA polymerase subunit omega (90 aa).

It belongs to the RNA polymerase subunit omega family. As to quaternary structure, the RNAP catalytic core consists of 2 alpha, 1 beta, 1 beta' and 1 omega subunit. When a sigma factor is associated with the core the holoenzyme is formed, which can initiate transcription.

It catalyses the reaction RNA(n) + a ribonucleoside 5'-triphosphate = RNA(n+1) + diphosphate. Its function is as follows. Promotes RNA polymerase assembly. Latches the N- and C-terminal regions of the beta' subunit thereby facilitating its interaction with the beta and alpha subunits. Required for kasugamycin production and aerial mycelium formation in S.kasugaensis and responsible for pleiotropy. The sequence is that of DNA-directed RNA polymerase subunit omega (rpoZ) from Streptomyces kasugaensis.